The chain runs to 530 residues: MGSNSGQAGRHIYKSLADDGPFDSVEPPKRPTSRLIMHSMAMFGREFCYAVEAAYVTPVLLSVGLPSSLYSIVWFLSPILGFLLQPVVGSASDHCRSRWGRRRPYILTLGVMMLVGMALYLNGATVVAALIANPRRKLVWAISVTMIGVVLFDFAADFIDGPIKAYLFDVCSHQDKEKGLHYHALFTGFGGALGYLLGAIDWAHLELGRLLGTEFQVMFFFSALVLTLCFTVHLCSISEAPLTEVAKGIPPQQTPQDPPLSSDGMYEYGSIEKVKNGYVNPELAMQGAKNKNHAEQTRRAMTLKSLLRALVNMPPHYRYLCISHLIGWTAFLSNMLFFTDFMGQIVYRGDPYSAHNSTEFLIYERGVEVGCWGLCINSVFSSLYSYFQKVLVSYIGLKGLYFTGYLLFGLGTGFIGLFPNVYSTLVLCSLFGVMSSTLYTVPFNLITEYHREEEKERQQAPGGDPDNSVRGKGMDCATLTCMVQLAQILVGGGLGFLVNTAGTVVVVVITASAVALIGCCFVALFVRYVD.

The Cytoplasmic portion of the chain corresponds to 1 to 46 (MGSNSGQAGRHIYKSLADDGPFDSVEPPKRPTSRLIMHSMAMFGRE). Residues 47-67 (FCYAVEAAYVTPVLLSVGLPS) traverse the membrane as a helical segment. Position 68 (S68) is a topological domain, extracellular. The helical transmembrane segment at 69 to 89 (LYSIVWFLSPILGFLLQPVVG) threads the bilayer. The Cytoplasmic segment spans residues 90 to 110 (SASDHCRSRWGRRRPYILTLG). Residues 111–131 (VMMLVGMALYLNGATVVAALI) traverse the membrane as a helical segment. The Extracellular portion of the chain corresponds to 132–138 (ANPRRKL). The chain crosses the membrane as a helical span at residues 139–159 (VWAISVTMIGVVLFDFAADFI). The Cytoplasmic portion of the chain corresponds to 160–184 (DGPIKAYLFDVCSHQDKEKGLHYHA). A helical transmembrane segment spans residues 185–205 (LFTGFGGALGYLLGAIDWAHL). Residues 206-216 (ELGRLLGTEFQ) are Extracellular-facing. A helical membrane pass occupies residues 217 to 237 (VMFFFSALVLTLCFTVHLCSI). The Cytoplasmic segment spans residues 238 to 318 (SEAPLTEVAK…ALVNMPPHYR (81 aa)). Residues 319-339 (YLCISHLIGWTAFLSNMLFFT) traverse the membrane as a helical segment. At 340–366 (DFMGQIVYRGDPYSAHNSTEFLIYERG) the chain is on the extracellular side. N356 carries an N-linked (GlcNAc...) asparagine glycan. Residues 367-387 (VEVGCWGLCINSVFSSLYSYF) form a helical membrane-spanning segment. The Cytoplasmic segment spans residues 388–398 (QKVLVSYIGLK). The chain crosses the membrane as a helical span at residues 399-419 (GLYFTGYLLFGLGTGFIGLFP). Residues 420–425 (NVYSTL) are Extracellular-facing. The helical transmembrane segment at 426–446 (VLCSLFGVMSSTLYTVPFNLI) threads the bilayer. Residues 447–477 (TEYHREEEKERQQAPGGDPDNSVRGKGMDCA) lie on the Cytoplasmic side of the membrane. A helical membrane pass occupies residues 478 to 498 (TLTCMVQLAQILVGGGLGFLV). Residues 499-504 (NTAGTV) lie on the Extracellular side of the membrane. A helical transmembrane segment spans residues 505–525 (VVVVITASAVALIGCCFVALF). At 526–530 (VRYVD) the chain is on the cytoplasmic side.

Belongs to the glycoside-pentoside-hexuronide (GPH) cation symporter transporter (TC 2.A.2) family. Interacts with TYRP1. As to expression, expressed in mature melanocytes.

It is found in the melanosome membrane. It carries out the reaction sucrose(out) + H(+)(out) = sucrose(in) + H(+)(in). The enzyme catalyses D-glucose(out) + H(+)(out) = D-glucose(in) + H(+)(in). In terms of biological role, proton-associated glucose and sucrose transporter. May be able to transport also fructose. Expressed at a late melanosome maturation stage where functions as proton/glucose exporter which increase lumenal pH by decreasing glycolysis. Regulates melanogenesis by maintaining melanosome neutralization that is initially initiated by transient OCA2 and required for a proper function of the tyrosinase TYR. This Homo sapiens (Human) protein is Membrane-associated transporter protein.